Reading from the N-terminus, the 403-residue chain is Non-structural maintenance of chromosomes element 4 homolog A (403 aa).

Residues 1 to 45 show a composition bias toward basic and acidic residues; that stretch reads MRKTVKRESEATGGKREADDEPEKLRSVKKEKQRKTEADSVRPDE. 3 disordered regions span residues 1–57, 194–226, and 342–403; these read MRKT…QGIS, LKQR…EEKT, and SSCP…LTSS. Over residues 196-206 the composition is skewed to basic residues; the sequence is QRKRAPNRKRT. Positions 342-353 are enriched in low complexity; the sequence is SSCPAASAPASA. The span at 354–363 shows a compositional bias: polar residues; that stretch reads DFTQDTQTTP. Over residues 384 to 393 the composition is skewed to basic and acidic residues; the sequence is TPDKEGDGTR. A compositionally biased stretch (basic residues) spans 394-403; sequence RRCKRRLTSS.

The protein belongs to the NSE4 family. In terms of assembly, interacts with SMC5, SMC6A or SMC6B. The SMC5-SMC6 complex is composed of the SMC5 and SMC6 heterodimer attached via their hinge domain and from the non-SMC subunit NSE4A or NSE4B. In terms of tissue distribution, expressed in seedlings, rosette leaves and floral buds.

The protein localises to the nucleus. In terms of biological role, component of the SMC5-SMC6 complex, that promotes sister chromatid alignment after DNA damage and facilitates double-stranded DNA breaks (DSBs) repair via homologous recombination between sister chromatids. The sequence is that of Non-structural maintenance of chromosomes element 4 homolog A (NSE4A) from Arabidopsis thaliana (Mouse-ear cress).